The primary structure comprises 199 residues: Thymidylate kinase (199 aa).

7-14 (GIDGSGKS) contributes to the ATP binding site.

The protein belongs to the thymidylate kinase family.

It carries out the reaction dTMP + ATP = dTDP + ADP. Phosphorylation of dTMP to form dTDP in both de novo and salvage pathways of dTTP synthesis. This chain is Thymidylate kinase, found in Thermosipho melanesiensis (strain DSM 12029 / CIP 104789 / BI429).